We begin with the raw amino-acid sequence, 440 residues long: Histidinol dehydrogenase (440 aa).

Positions 136, 197, and 220 each coordinate NAD(+). 3 residues coordinate substrate: Ser243, Gln265, and His268. Gln265 and His268 together coordinate Zn(2+). Residues Glu333 and His334 each act as proton acceptor in the active site. Substrate is bound by residues His334, Asp367, Glu421, and His426. Asp367 provides a ligand contact to Zn(2+). Residue His426 coordinates Zn(2+).

Belongs to the histidinol dehydrogenase family. Zn(2+) is required as a cofactor.

The enzyme catalyses L-histidinol + 2 NAD(+) + H2O = L-histidine + 2 NADH + 3 H(+). It functions in the pathway amino-acid biosynthesis; L-histidine biosynthesis; L-histidine from 5-phospho-alpha-D-ribose 1-diphosphate: step 9/9. Functionally, catalyzes the sequential NAD-dependent oxidations of L-histidinol to L-histidinaldehyde and then to L-histidine. This is Histidinol dehydrogenase from Pseudomonas aeruginosa (strain ATCC 15692 / DSM 22644 / CIP 104116 / JCM 14847 / LMG 12228 / 1C / PRS 101 / PAO1).